A 382-amino-acid polypeptide reads, in one-letter code: Regulatory protein RapC (382 aa).

TPR repeat units follow at residues 102–138 (YYVN…VADH), 149–182 (AEAY…NVRI), 183–216 (IQCH…AQAE), 223–256 (GRAY…FESS), and 263–296 (PQAY…AKET).

It belongs to the Rap family. In terms of assembly, homodimer. Interacts specifically with the C-terminal DNA-binding domain of ComA. Interacts with CSF.

The protein localises to the cytoplasm. Inhibited by the competence and sporulation stimulating factor (CSF), encoded by phrC, which prevents RapC-ComA interaction. In terms of biological role, involved in the regulation of genetic competence development. Inhibits the activity of ComA, a transcriptional factor that regulates the development of genetic competence. Acts by binding to ComA, independently of its phosphorylation state, leading to the inhibition of ComA DNA-binding activity. Does not dephosphorylate phospho-ComA and does not affect the phosphorylation level of the ComP-ComA system. This Bacillus subtilis (strain 168) protein is Regulatory protein RapC (rapC).